Consider the following 549-residue polypeptide: Oxygen-dependent choline dehydrogenase (549 aa).

Residue 4–33 (DFVIIGSGSAGSAMASRLSEDGKHTVIVLE) participates in FAD binding. His465 serves as the catalytic Proton acceptor.

It belongs to the GMC oxidoreductase family. It depends on FAD as a cofactor.

It catalyses the reaction choline + A = betaine aldehyde + AH2. It carries out the reaction betaine aldehyde + NAD(+) + H2O = glycine betaine + NADH + 2 H(+). It participates in amine and polyamine biosynthesis; betaine biosynthesis via choline pathway; betaine aldehyde from choline (cytochrome c reductase route): step 1/1. Its function is as follows. Involved in the biosynthesis of the osmoprotectant glycine betaine. Catalyzes the oxidation of choline to betaine aldehyde and betaine aldehyde to glycine betaine at the same rate. This chain is Oxygen-dependent choline dehydrogenase, found in Rhizobium rhizogenes (strain K84 / ATCC BAA-868) (Agrobacterium radiobacter).